Consider the following 227-residue polypeptide: DNA repair protein RecO (227 aa).

It belongs to the RecO family.

Its function is as follows. Involved in DNA repair and RecF pathway recombination. The polypeptide is DNA repair protein RecO (Pseudomonas entomophila (strain L48)).